A 353-amino-acid chain; its full sequence is Melanin-concentrating hormone receptor 1 (353 aa).

The segment at 1–28 (MDLEASLLPTGPNASNTSDGPDNLTSAG) is disordered. Residues 1–45 (MDLEASLLPTGPNASNTSDGPDNLTSAGPPPRTGSISYVNIIMPS) are Extracellular-facing. Over residues 12-26 (PNASNTSDGPDNLTS) the composition is skewed to polar residues. 3 N-linked (GlcNAc...) asparagine glycosylation sites follow: Asn-13, Asn-16, and Asn-23. A helical transmembrane segment spans residues 46–66 (VFGTICLLGIIGNSMVIFAVV). Over 67 to 79 (KKSKLHWFSNVPD) the chain is Cytoplasmic. Residues 80–100 (IFIINLSVVDLLFLLGMPFMI) traverse the membrane as a helical segment. Residues 101 to 116 (HQLMGNGVWHFGETMC) are Extracellular-facing. Cys-116 and Cys-194 are disulfide-bonded. The chain crosses the membrane as a helical span at residues 117-139 (TLITAMDANSQFTSTYILTAMAI). At 140–161 (DRYLATVHPISSTRFRKPSVAT) the chain is on the cytoplasmic side. A helical transmembrane segment spans residues 162–182 (LVICLLWALSIISITPVWLYA). At 183–204 (RLIPFPGGTVGCGIRLPNPDTD) the chain is on the extracellular side. The helical transmembrane segment at 205-225 (LYWFTLYQFFLAFALPFVVIT) threads the bilayer. Residues 226–256 (AAYVRILQRMTSSVAPASQRSIRLRTKRVTR) lie on the Cytoplasmic side of the membrane. Residues 257 to 277 (TAIAICLVFFVCWAPYYVLQL) traverse the membrane as a helical segment. Over 278–294 (TQLSISRPTLTFVYLYN) the chain is Extracellular. The helical transmembrane segment at 295-315 (AAISLGYANSCLNPFVYIVLC) threads the bilayer. Residues 316-353 (ETFRKRLVLSVKPAAQGQLRAVSNAQTAEEERTESKGT) are Cytoplasmic-facing.

This sequence belongs to the G-protein coupled receptor 1 family. Interacts with NCDN.

The protein localises to the cell membrane. Its function is as follows. Receptor for melanin-concentrating hormone, coupled to both G proteins that inhibit adenylyl cyclase and G proteins that activate phosphoinositide hydrolysis. In Sus scrofa (Pig), this protein is Melanin-concentrating hormone receptor 1.